The primary structure comprises 582 residues: Insulin-like growth factor 2 mRNA-binding protein 3 (582 aa).

2 consecutive RRM domains span residues 2 to 75 (NKLY…HSVP) and 81 to 156 (CKLQ…YIPD). Positions 164 to 190 (PAVGGRRGFNPRGPPRQGSPSLGARPK) are disordered. Serine 182 carries the phosphoserine modification. 4 consecutive KH domains span residues 194–259 (DVPL…CRNI), 275–342 (EIPL…EEEI), 408–473 (SETV…QGRI), and 490–556 (KLEA…QRKI). The interval 562-582 (QVRRQQQPKPSAAGPPVARRK) is disordered.

The protein belongs to the RRM IMP/VICKZ family. Homodimer and multimer.

The protein localises to the cytoplasm. Its subcellular location is the nucleus. The protein resides in the P-body. It is found in the stress granule. In terms of biological role, RNA-binding factor that may recruit target transcripts to cytoplasmic protein-RNA complexes (mRNPs). This transcript 'caging' into mRNPs allows mRNA transport and transient storage. It also modulates the rate and location at which target transcripts encounter the translational apparatus and shields them from endonuclease attacks or microRNA-mediated degradation. Preferentially binds to N6-methyladenosine (m6A)-containing mRNAs and increases their stability. Involved in neuronal crest migration. The sequence is that of Insulin-like growth factor 2 mRNA-binding protein 3 (igf2bp3) from Danio rerio (Zebrafish).